The primary structure comprises 438 residues: MANNVVVLGTQWGDEGKGKIVDLLTEDAKYVVRYQGGHNAGHTLVIDGVKTVLHLIPSGILRDNVKCVIGNGVVLSPEALIKEMKPLEERGIPVRERLFISEACPLILPYHVAMDQAREIARGKKAIGTTGRGIGPAYEDKVARRGLRVGDLFDMEAFAEKLKEVMEFHNFQLVNFYKAEAVSYEEVLEQAKGYAELLTSMVIDVTDELDAARKRGDKIMFEGAQGTLLDIDHGTYPYVTSSNTTAGGVAAGSGFGPRYLGYILGIAKAYCTRVGAGPFPTELYDGQEKQDPVGKHLGTVGHEFGATTGRLRRTGWFDAVAMRRAIQINSVSGFCLTKLDVLDGLKELKICTGYQMEDGSVLEVSPMAAEAFEKVTPIYETMPGWSENTFGAKSLEDLPQAAINYIKRIEELTGVPVDIISTGPDRNETIVKVHPFES.

GTP contacts are provided by residues 13 to 19 and 41 to 43; these read GDEGKGK and GHT. Asp-14 (proton acceptor) is an active-site residue. Mg(2+) contacts are provided by Asp-14 and Gly-41. IMP contacts are provided by residues 14-17, 39-42, Thr-130, Arg-144, Gln-225, Thr-240, and Arg-310; these read DEGK and NAGH. The active-site Proton donor is the His-42. 306 to 312 is a substrate binding site; the sequence is ATTGRLR. GTP contacts are provided by residues Arg-312, 338–340, and 421–423; these read KLD and STG.

Belongs to the adenylosuccinate synthetase family. As to quaternary structure, homodimer. The cofactor is Mg(2+).

The protein localises to the cytoplasm. The catalysed reaction is IMP + L-aspartate + GTP = N(6)-(1,2-dicarboxyethyl)-AMP + GDP + phosphate + 2 H(+). The protein operates within purine metabolism; AMP biosynthesis via de novo pathway; AMP from IMP: step 1/2. Plays an important role in the de novo pathway of purine nucleotide biosynthesis. Catalyzes the first committed step in the biosynthesis of AMP from IMP. The chain is Adenylosuccinate synthetase from Vibrio vulnificus (strain YJ016).